We begin with the raw amino-acid sequence, 320 residues long: Glucosaminate ammonia-lyase (320 aa).

Position 36–43 (36–43) interacts with FAD; it reads TGMQAGGQ. Residues Cys136 and Cys139 are joined by a disulfide bond. 285–294 contacts FAD; the sequence is DVADHVYRQA.

The protein belongs to the class-II pyridine nucleotide-disulfide oxidoreductase family.

The enzyme catalyses 2-amino-2-deoxy-D-gluconate = 2-dehydro-3-deoxy-D-gluconate + NH4(+). Functionally, catalyzes the conversion of 2-amino-2-deoxy-D-gluconate (GlcNA) to 2-keto-3-deoxy-D-gluconic acid (KDGA) and ammonia. The sequence is that of Glucosaminate ammonia-lyase from Pseudomonas fluorescens.